Consider the following 188-residue polypeptide: MTLRIIAHLLALTASLAGCTSTAPIYVEQPTPIFVRQESTVLKLESFHASEQQRLLAFLWKASRGRRDALHLVISGSSRLSAEAVHQARQMGIGASNIHLLDQNDRGHLRIEAVVYHALPPICRSLSSQLLNDEFFDQPIGCSTSHNLAVMINDPRDLLGNRFVKPSDGDRAAIPVTTYRTSTGKGGL.

The signal sequence occupies residues 1–18; that stretch reads MTLRIIAHLLALTASLAG. A lipid anchor (N-palmitoyl cysteine) is attached at Cys-19. The S-diacylglycerol cysteine moiety is linked to residue Cys-19.

The protein resides in the cell membrane. This is an uncharacterized protein from Sinorhizobium fredii (strain NBRC 101917 / NGR234).